Here is a 579-residue protein sequence, read N- to C-terminus: Protein LYRIC (579 aa).

Residues 1–48 (MAARSWQDELAQQAEEGSARLRELLSVGLGFLRTELGLDLGLEPKRYP) are Lumenal-facing. An activation of NF-kappa-B region spans residues 1 to 71 (MAARSWQDEL…LLLFLLGYGW (71 aa)). A helical membrane pass occupies residues 49-69 (GWVILVGTGALGLLLLFLLGY). Residues 70–579 (GWAAACAGAR…KKKKKARRET (510 aa)) lie on the Cytoplasmic side of the membrane. Residues 72-168 (AAACAGARKK…EKSKKNKKKS (97 aa)) are interaction with BCCIP. Residues 78 to 222 (ARKKRRSPPR…SGSLDSTIPG (145 aa)) are disordered. The tract at residues 100–204 (DDLAQLKNLR…ISHREKRQQR (105 aa)) is interaction with RELA. Positions 108–126 (LRSEEQKKKNRKKLPEKPK) are enriched in basic and acidic residues. Over residues 159–168 (EKSKKNKKKS) the composition is skewed to basic residues. S179 carries the post-translational modification Phosphoserine. Residues 197-207 (HREKRQQRKRD) are compositionally biased toward basic residues. S215 and S250 each carry phosphoserine. Residue K263 is modified to N6-acetyllysine. Positions 277–579 (NLTVNGGGWS…KKKKKARRET (303 aa)) are disordered. S297, S303, and S308 each carry phosphoserine. Residues 317–329 (SAWTQDTGDTNAN) are compositionally biased toward polar residues. Phosphoserine occurs at positions 341 and 366. Composition is skewed to polar residues over residues 351–369 (EPVSQSTTSDYQWDVSRNQ), 380–391 (NGLSSADPSSDW), and 410–420 (LKSQEPISNDQ). A lung-homing for mammary tumors region spans residues 378 to 440 (GLNGLSSADP…EGALPTGKSK (63 aa)). Phosphoserine is present on residues S412 and S423. Residues 421 to 431 (KVSDDDKEKGE) show a composition bias toward basic and acidic residues. The span at 438-448 (KSKKKKKKKKK) shows a compositional bias: basic residues. Basic and acidic residues predominate over residues 449–470 (QGEDNSHTQDTEDLEKDTREEL). Phosphoserine occurs at positions 454, 475, 491, and 493. Composition is skewed to polar residues over residues 517–533 (PSITLSKGDSDNSSSQV) and 546–565 (NAKQNSVPPSQTKSETNWES). S565 is modified (phosphoserine). Basic residues predominate over residues 568 to 579 (QIKKKKKARRET).

Interacts with BCCIP, CREBBP/CBP and RELA/p65. In the mammary gland, expressed at the apical surface of epithelial cells lining ducts, as well as in the mammary fat pad. Not detected in the spleen, kidney, lung, or skin; minute amounts seen in the liver. Expressed in Purkinje neurons in the early postnatal and adult cerebellum. Overexpressed in mammary tumors (at protein level).

The protein resides in the endoplasmic reticulum membrane. It localises to the nucleus membrane. It is found in the cell junction. Its subcellular location is the tight junction. The protein localises to the nucleus. The protein resides in the nucleolus. It localises to the cytoplasm. It is found in the perinuclear region. In terms of biological role, down-regulates SLC1A2/EAAT2 promoter activity when expressed ectopically. Activates the nuclear factor kappa-B (NF-kappa-B) transcription factor. Promotes anchorage-independent growth of immortalized melanocytes and astrocytes which is a key component in tumor cell expansion. Promotes lung metastasis and also has an effect on bone and brain metastasis, possibly by enhancing the seeding of tumor cells to the target organ endothelium. Induces chemoresistance. In Mus musculus (Mouse), this protein is Protein LYRIC (Mtdh).